The chain runs to 160 residues: Phosphoribosyl-ATP pyrophosphatase (160 aa).

Belongs to the PRA-PH family.

It localises to the cytoplasm. The enzyme catalyses 1-(5-phospho-beta-D-ribosyl)-ATP + H2O = 1-(5-phospho-beta-D-ribosyl)-5'-AMP + diphosphate + H(+). The protein operates within amino-acid biosynthesis; L-histidine biosynthesis; L-histidine from 5-phospho-alpha-D-ribose 1-diphosphate: step 2/9. The sequence is that of Phosphoribosyl-ATP pyrophosphatase from Granulibacter bethesdensis (strain ATCC BAA-1260 / CGDNIH1).